Here is a 243-residue protein sequence, read N- to C-terminus: Small ribosomal subunit protein uS3 (243 aa).

A KH type-2 domain is found at 39–107; the sequence is MRKFVMSELK…ETHLNIVEVR (69 aa). The disordered stretch occupies residues 214 to 243; it reads ASERRAMEGDAQGPASRDRDRDRDRRRDNA. Residues 229–243 are compositionally biased toward basic and acidic residues; sequence SRDRDRDRDRRRDNA.

Belongs to the universal ribosomal protein uS3 family. In terms of assembly, part of the 30S ribosomal subunit. Forms a tight complex with proteins S10 and S14.

Its function is as follows. Binds the lower part of the 30S subunit head. Binds mRNA in the 70S ribosome, positioning it for translation. This chain is Small ribosomal subunit protein uS3, found in Rhizobium leguminosarum bv. trifolii (strain WSM2304).